The following is a 1226-amino-acid chain: Polyamine-transporting ATPase 13A3 (1226 aa).

Over 1-28 (MDREERKTINQGQEDEMEIYGYNLSRWK) the chain is Cytoplasmic. Residues 29–49 (LAIVSLGVICSGGFLLLLLYW) lie within the membrane without spanning it. Residues 50-205 (MPEWRVKATC…IAVKVPSVFK (156 aa)) lie on the Cytoplasmic side of the membrane. Ser-98 carries the phosphoserine modification. Residues 206–226 (LLIKEVLNPFYIFQLFSVILW) traverse the membrane as a helical segment. Topologically, residues 227–232 (STDEYY) are lumenal. The helical transmembrane segment at 233-253 (YYALAIVVMSIVSIVSSLYSI) threads the bilayer. Topologically, residues 254 to 409 (RKQYVMLHDM…KPTDFKLYRD (156 aa)) are cytoplasmic. The chain crosses the membrane as a helical span at residues 410–430 (AYLFLLCLVAVAGIGFIYTII). The Lumenal portion of the chain corresponds to 431–448 (NSILNEVQVGVIIIESLD). Residues 449 to 469 (IITITVPPALPAAMTAGIVYA) form a helical membrane-spanning segment. Residues 470–940 (QRRLKKIGIF…ALITSFCVFK (471 aa)) are Cytoplasmic-facing. Asp-498 (4-aspartylphosphate intermediate) is an active-site residue. Positions 498 and 500 each coordinate Mg(2+). ATP is bound by residues 498-500 (DKT), Phe-628, Arg-684, and Asp-750. Ser-817 is modified (phosphoserine). Mg(2+)-binding residues include Asp-883 and Asp-887. 883–887 (DGAND) contributes to the ATP binding site. Residues 941–961 (FMALYSIIQYFSVTLLYSILS) form a helical membrane-spanning segment. Asn-962 is a topological domain (lumenal). Residues 963-983 (LGDFQFLFIDLAIILVVVFTM) form a helical membrane-spanning segment. Residues 984-999 (SLNPAWKELVAQRPPS) are Cytoplasmic-facing. The helical transmembrane segment at 1000–1020 (GLISGALLFSVLSQIIICIGF) threads the bilayer. At 1021 to 1073 (QSLGFFWVKQQPWYEVWHPKSDACNTTGSGFWNSSHVDNETELDEHNIQNYEN) the chain is on the lumenal side. A helical transmembrane segment spans residues 1074 to 1094 (TTVFFISSFQYLIVAIAFSKG). At 1095-1105 (KPFRQPCYKNY) the chain is on the cytoplasmic side. Residues 1106–1126 (FFVFSVIFLYIFILFIMLYPV) form a helical membrane-spanning segment. Residues 1127–1143 (ASVDQVLQIVCVPYQWR) are Lumenal-facing. The helical transmembrane segment at 1144-1164 (VTMLIIVLVNAFVSITVEESV) threads the bilayer. Over 1165–1226 (DRWGKCCLPW…NGSCQIITIT (62 aa)) the chain is Cytoplasmic.

Belongs to the cation transport ATPase (P-type) (TC 3.A.3) family. Type V subfamily. Broadly expressed.

It is found in the recycling endosome membrane. Its subcellular location is the early endosome membrane. The protein localises to the late endosome membrane. The enzyme catalyses putrescine(out) + ATP + H2O = putrescine(in) + ADP + phosphate + H(+). Functionally, ATP-driven pump involved in endocytosis-dependent polyamine transport. Uses ATP as an energy source to transfer polyamine precursor putrescine from the endosomal compartment to the cytosol. This is Polyamine-transporting ATPase 13A3 from Homo sapiens (Human).